The following is a 567-amino-acid chain: Hexose transporter HXT9 (567 aa).

The span at 1–16 (MSGVNNTSANDLSTTE) shows a compositional bias: polar residues. Residues 1–45 (MSGVNNTSANDLSTTESNSNSVANAPSVKTEHNDSKNSLNLDATE) form a disordered region. Residues 1 to 56 (MSGVNNTSANDLSTTESNSNSVANAPSVKTEHNDSKNSLNLDATEPPIDLPQKPLS) are Cytoplasmic-facing. Low complexity predominate over residues 17–28 (SNSNSVANAPSV). A helical transmembrane segment spans residues 57–77 (AYTTVAILCLMIAFGGFIFGW). Over 78-112 (DTGTISGFVNLSDFIRRFGQKNDKGTYYLSKVRMG) the chain is Extracellular. An N-linked (GlcNAc...) asparagine glycan is attached at N87. A helical transmembrane segment spans residues 113 to 133 (LIVSIFNIGCAIGGIVLSKVG). Topologically, residues 134–139 (DIYGRR) are cytoplasmic. A helical membrane pass occupies residues 140–160 (IGLITVTAIYVVGILIQITSI). Residues 161-170 (NKWYQYFIGR) are Extracellular-facing. The helical transmembrane segment at 171–191 (IISGLGVGGIAVLSPMLISEV) threads the bilayer. At 192–197 (APKQIR) the chain is on the cytoplasmic side. The helical transmembrane segment at 198–218 (GTLVQLYQLMCTMGIFLGYCT) threads the bilayer. Residues 219–232 (NYGTKNYHNATQWR) are Extracellular-facing. The N-linked (GlcNAc...) asparagine glycan is linked to N227. The helical transmembrane segment at 233-253 (VGLGLCFAWTTFMVSGMMFVP) threads the bilayer. The Cytoplasmic portion of the chain corresponds to 254-336 (ESPRYLIEVG…IQSLQQLTGD (83 aa)). The helical transmembrane segment at 337–353 (NYFFYYGTTIFKSVGLK) threads the bilayer. Over 354-359 (DSFQTS) the chain is Extracellular. Residues 360 to 377 (IIIGVVNFFSSFIAVYTI) form a helical membrane-spanning segment. Residues 378–384 (ERFGRRT) lie on the Cytoplasmic side of the membrane. The chain crosses the membrane as a helical span at residues 385-405 (CLLWGAASMLCCFAVFASVGV). Residues 406-429 (TKLWPQGSSHQDITSQGAGNCMIV) lie on the Extracellular side of the membrane. Residues 430–450 (FTMFFIFSFATTWAGGCYVIV) form a helical membrane-spanning segment. Residues 451–467 (SETFPLRVKSRGMAIAT) lie on the Cytoplasmic side of the membrane. A helical membrane pass occupies residues 468-488 (AANWMWGFLISFFTPFITGAI). Position 489 (N489) is a topological domain, extracellular. A helical membrane pass occupies residues 490–510 (FYYGYVFLGCLVFAYFYVFFF). Residues 511–567 (VPETKGLTLEEVNTMWLEGVPAWKSASWVPPERRTADYDADAIDHDDRPIYKRFFSS) lie on the Cytoplasmic side of the membrane.

The protein belongs to the major facilitator superfamily. Sugar transporter (TC 2.A.1.1) family.

It is found in the membrane. Its function is as follows. Probable glucose transporter. The polypeptide is Hexose transporter HXT9 (HXT9) (Saccharomyces cerevisiae (strain ATCC 204508 / S288c) (Baker's yeast)).